We begin with the raw amino-acid sequence, 282 residues long: Pantothenate synthetase (282 aa).

26-33 serves as a coordination point for ATP; it reads MGNLHDGH. Residue His-33 is the Proton donor of the active site. Gln-57 contributes to the (R)-pantoate binding site. Residue Gln-57 coordinates beta-alanine. 148 to 151 contacts ATP; that stretch reads GKKD. Position 154 (Gln-154) interacts with (R)-pantoate. 185 to 188 contributes to the ATP binding site; it reads LSSR.

It belongs to the pantothenate synthetase family. Homodimer.

Its subcellular location is the cytoplasm. The enzyme catalyses (R)-pantoate + beta-alanine + ATP = (R)-pantothenate + AMP + diphosphate + H(+). It participates in cofactor biosynthesis; (R)-pantothenate biosynthesis; (R)-pantothenate from (R)-pantoate and beta-alanine: step 1/1. Catalyzes the condensation of pantoate with beta-alanine in an ATP-dependent reaction via a pantoyl-adenylate intermediate. This Polaromonas sp. (strain JS666 / ATCC BAA-500) protein is Pantothenate synthetase.